A 273-amino-acid polypeptide reads, in one-letter code: uncharacterized protein (273 aa).

Residues 7 to 25 (FFRWAFLIATVYVAYYFLV) form a helical membrane-spanning segment. Disordered stretches follow at residues 34 to 154 (KPQK…LKMK) and 168 to 273 (LHNS…DSLW). A compositionally biased stretch (basic residues) spans 36-54 (QKSKLTKLGKQKQRQKQKN). The segment covering 55–91 (TKKDTLVNRETPSKKSQKLETSDALKSKSKDSSKKEP) has biased composition (basic and acidic residues). Residues 92–101 (VVVPKKGTPK) are compositionally biased toward low complexity. The span at 115-144 (PKKEKLVGKNPAEKEDTTDVEDTQKLEQKH) shows a compositional bias: basic and acidic residues. Positions 145–154 (STTPSSLKMK) are enriched in polar residues. Over residues 201 to 212 (KRQRQNQQKKLR) the composition is skewed to basic residues. The segment covering 213–240 (AKEMQELADEEQRRRLAAHRKELHEANR) has biased composition (basic and acidic residues). Positions 245–266 (LNNSSRSAYSYINNGQAGSSKG) are enriched in polar residues.

It is found in the cytoplasm. Its subcellular location is the membrane. This is an uncharacterized protein from Schizosaccharomyces pombe (strain 972 / ATCC 24843) (Fission yeast).